We begin with the raw amino-acid sequence, 1451 residues long: DNA polymerase III PolC-type (1451 aa).

The Exonuclease domain occupies 416-575; sequence FVIFDIETTG…YDTEALKKVF (160 aa).

This sequence belongs to the DNA polymerase type-C family. PolC subfamily.

It is found in the cytoplasm. It carries out the reaction DNA(n) + a 2'-deoxyribonucleoside 5'-triphosphate = DNA(n+1) + diphosphate. In terms of biological role, required for replicative DNA synthesis. This DNA polymerase also exhibits 3' to 5' exonuclease activity. The polypeptide is DNA polymerase III PolC-type (Mycoplasma genitalium (strain ATCC 33530 / DSM 19775 / NCTC 10195 / G37) (Mycoplasmoides genitalium)).